The primary structure comprises 178 residues: uncharacterized protein (178 aa).

The protein belongs to the mycobacterial PPE family.

This is an uncharacterized protein from Mycobacterium tuberculosis (strain CDC 1551 / Oshkosh).